The sequence spans 470 residues: 3-oxo-isoapionate kinase (470 aa).

Residues aspartate 30 and arginine 78 each contribute to the substrate site. ATP contacts are provided by residues serine 291, 403 to 406, and glycine 451; that span reads GGDS.

It belongs to the four-carbon acid sugar kinase family.

It carries out the reaction 3-oxoisoapionate + ATP = 3-oxoisoapionate 4-phosphate + ADP + H(+). It functions in the pathway carbohydrate metabolism. In terms of biological role, involved in catabolism of D-apiose. Catalyzes the phosphorylation of 3-oxo-isoapionate to 3-oxo-isoapionate 4-phosphate. In Paraburkholderia graminis (strain ATCC 700544 / DSM 17151 / LMG 18924 / NCIMB 13744 / C4D1M), this protein is 3-oxo-isoapionate kinase.